The primary structure comprises 581 residues: Ketol-acid reductoisomerase, chloroplastic (581 aa).

Residues 1–50 (MAAVTSSCSTAISASSKTLAKPVAASFAPTNLSFSKLSPQSIRARRSITV) constitute a chloroplast transit peptide. In terms of domain architecture, KARI N-terminal Rossmann spans 92–290 (VRGGRDLFHL…ALGSPFTFAT (199 aa)). Residues 113-120 (GVIGWGSQ), 146-151 (RKGSSS), and 185-189 (SDSAQ) contribute to the NADP(+) site. Residue H210 is part of the active site. KARI C-terminal knotted domains follow at residues 291–439 (TLEQ…RPAG) and 440–576 (DLGP…RPEL). Positions 299, 303, 476, and 480 each coordinate Mg(2+). Residue S502 participates in substrate binding.

It belongs to the ketol-acid reductoisomerase family. In terms of assembly, homodimer. Mg(2+) is required as a cofactor.

The protein resides in the plastid. It localises to the chloroplast. It catalyses the reaction (2R)-2,3-dihydroxy-3-methylbutanoate + NADP(+) = (2S)-2-acetolactate + NADPH + H(+). The catalysed reaction is (2R,3R)-2,3-dihydroxy-3-methylpentanoate + NADP(+) = (S)-2-ethyl-2-hydroxy-3-oxobutanoate + NADPH + H(+). The protein operates within amino-acid biosynthesis; L-isoleucine biosynthesis; L-isoleucine from 2-oxobutanoate: step 2/4. It participates in amino-acid biosynthesis; L-valine biosynthesis; L-valine from pyruvate: step 2/4. The polypeptide is Ketol-acid reductoisomerase, chloroplastic (PGAAIR) (Pisum sativum (Garden pea)).